Reading from the N-terminus, the 1598-residue chain is Structural maintenance of chromosomes flexible hinge domain-containing protein GMI1 (1598 aa).

The disordered stretch occupies residues 1191–1218 (VTSAPTSEREESGYSTPHSKTTPPPESG). 2 coiled-coil regions span residues 1258 to 1301 (TEDL…ASLE) and 1565 to 1595 (EEMM…FTAM).

As to expression, highly expressed in closed buds and open flowers. Expressed at low levels in roots, stems, cauline leaves and siliques. Expressed in the region of the shoot and floral meristems.

The protein resides in the nucleus. Contributes to DNA double-strand break (DSB) repair via somatic homologous recombination. Functions downstream of ATM. The polypeptide is Structural maintenance of chromosomes flexible hinge domain-containing protein GMI1 (Arabidopsis thaliana (Mouse-ear cress)).